The primary structure comprises 282 residues: Probable endonuclease LCL3 (282 aa).

Residues 55 to 71 (SNLIPTVLLTSGILFAV) form a helical membrane-spanning segment. The 162-residue stretch at 95 to 256 (RSILGKVTSV…KKKGKGLWKA (162 aa)) folds into the TNase-like domain. The active site involves Arg144. Asp149 lines the Ca(2+) pocket. Catalysis depends on residues Glu152 and Arg192.

Belongs to the LCL3 family.

The protein resides in the mitochondrion. The protein localises to the membrane. This is Probable endonuclease LCL3 (LCL3) from Arthroderma otae (strain ATCC MYA-4605 / CBS 113480) (Microsporum canis).